The primary structure comprises 211 residues: Wound-induced protein WIN2 (211 aa).

Positions 1–25 (MVKLSCGPILLALVLCISLTSVANA) are cleaved as a signal peptide. One can recognise a Chitin-binding type-1 domain in the interval 26 to 68 (QQCGRQRGGALCGNNLCCSQFGWCGSTPEYCSPSQGCQSQCTG). Intrachain disulfides connect C28–C43, C37–C49, C42–C56, and C62–C66. In terms of domain architecture, Barwin spans 77-198 (GSAQNVRATY…VNYQFVNCGD (122 aa)).

This Solanum tuberosum (Potato) protein is Wound-induced protein WIN2 (WIN2).